The sequence spans 1074 residues: Collagen, type I, alpha 1a (1074 aa).

The segment covering 1-13 (KSPAMPVPGPMGP) has biased composition (pro residues). The segment at 1–1010 (KSPAMPVPGP…PQEKAPDPYR (1010 aa)) is disordered. Over residues 14–36 (MGPRSGPQGFPGEAGAAGAMGPR) the composition is skewed to low complexity. The span at 45–59 (NGEDGESGKPGRGGE) shows a compositional bias: basic and acidic residues. Over residues 129–147 (TGAAGAAGARGNDGAAGAA) the composition is skewed to low complexity. Residues 149–162 (PPGPTGPAGPPGFP) are compositionally biased toward pro residues. Residues 163–181 (GGPGAKGDAGAQGGRGPEG) are compositionally biased toward gly residues. 3 stretches are compositionally biased toward low complexity: residues 182 to 225 (PAGA…AGAP), 234 to 272 (SGPQ…APGV), and 290 to 299 (EPGAAGARGA). Positions 301 to 313 (GERGGPGGRGFPG) are enriched in gly residues. Composition is skewed to low complexity over residues 377 to 392 (VGAR…PGPK), 469 to 530 (VPGE…QGMP), and 563 to 578 (RGLT…AGAT). Gly residues predominate over residues 588–597 (GPVGPGGARG). Composition is skewed to low complexity over residues 611 to 647 (AGFA…AGPT) and 661 to 683 (PKGA…AGRV). Residues 685 to 697 (PPGPSGNPGPPGP) are compositionally biased toward pro residues. 2 stretches are compositionally biased toward low complexity: residues 715–742 (PAGR…SEGA) and 803–823 (PGLA…SEGS). A compositionally biased stretch (pro residues) spans 847 to 857 (APGPPGAPGPV). Positions 871–890 (PAGPAGSAGPAGPRGPAGAP) are enriched in low complexity. The segment covering 893–907 (RGDKGESGEAGERGH) has biased composition (basic and acidic residues). Residues 920–956 (SGSSGEQGPAGAAGPAGPRGPAGSAGSPGKDGMSGLP) show a composition bias toward low complexity. Residues 974–986 (AGPPGPPGPPGAP) show a composition bias toward pro residues. Residues 1014–1074 (LEVDSTLKSL…GLEVGPVCFL (61 aa)) form the Fibrillar collagen NC1 domain.

Belongs to the fibrillar collagen family.

It localises to the secreted. Its subcellular location is the extracellular space. The protein resides in the extracellular matrix. This chain is Collagen, type I, alpha 1a, found in Epinephelus marginatus (Dusky grouper).